Reading from the N-terminus, the 398-residue chain is Dual specificity mitogen-activated protein kinase kinase 2 (398 aa).

A disordered region spans residues 1–29; that stretch reads MPAKRKPVLPALTITPSPAEGPGPGGSAE. A Protein kinase domain is found at 70–367; that stretch reads FERISELGAG…LKMLMNHTFI (298 aa). ATP-binding positions include 76 to 84 and Lys-99; that span reads LGAGNGGVV. The active-site Proton acceptor is Asp-192. Phosphoserine; by RAF is present on residues Ser-220 and Ser-224.

This sequence belongs to the protein kinase superfamily. STE Ser/Thr protein kinase family. MAP kinase kinase subfamily. Post-translationally, activated by phosphorylation on Ser/Thr catalyzed by MAP kinase kinase kinases (RAF).

The enzyme catalyses L-seryl-[protein] + ATP = O-phospho-L-seryl-[protein] + ADP + H(+). It catalyses the reaction L-threonyl-[protein] + ATP = O-phospho-L-threonyl-[protein] + ADP + H(+). It carries out the reaction L-tyrosyl-[protein] + ATP = O-phospho-L-tyrosyl-[protein] + ADP + H(+). Catalyzes the concomitant phosphorylation of a threonine and a tyrosine residue in a Thr-Glu-Tyr sequence located in MAP kinases. Activates the ERK1 and ERK2 MAP kinases. This is Dual specificity mitogen-activated protein kinase kinase 2 (MAP2K2) from Gallus gallus (Chicken).